Consider the following 223-residue polypeptide: PRA1 family protein B5 (223 aa).

Helical transmembrane passes span 83 to 103, 105 to 125, 146 to 166, 170 to 190, and 196 to 216; these read SSYF…FSLL, HPFS…LYLF, GGLI…SVLI, MIGI…DLFL, and AASG…APSA.

The protein belongs to the PRA1 family. In terms of assembly, interacts with PRA1B1, PRA1B2, PRA1B3, PRA1B4, PRA1B6 and PRA1E. Expressed in roots, lateral roots, lateral root caps, columella cells, leaves, and shoot apex.

It localises to the endosome membrane. Its function is as follows. May be involved in both secretory and endocytic intracellular trafficking in the endosomal/prevacuolar compartments. This is PRA1 family protein B5 (PRA1B5) from Arabidopsis thaliana (Mouse-ear cress).